A 540-amino-acid polypeptide reads, in one-letter code: Putative cysteine ligase BshC (540 aa).

The stretch at 425–453 (IEKVEGMIEQQRRLNKDLLDEVAGNQNNI) forms a coiled coil.

The protein belongs to the BshC family.

Functionally, involved in bacillithiol (BSH) biosynthesis. May catalyze the last step of the pathway, the addition of cysteine to glucosamine malate (GlcN-Mal) to generate BSH. In Staphylococcus aureus (strain NCTC 8325 / PS 47), this protein is Putative cysteine ligase BshC.